The following is a 283-amino-acid chain: NifU-like protein 4, mitochondrial (283 aa).

The transit peptide at 1-48 directs the protein to the mitochondrion; the sequence is MKGIARLVTSLSRIGGRKVVSGTSTVTSSSSSSLLLSRRSLFISATNL.

Belongs to the NifU family. As to expression, predominantly expressed in roots.

It is found in the mitochondrion. Molecular scaffold for [Fe-S] cluster assembly of mitochondrial iron-sulfur proteins. The chain is NifU-like protein 4, mitochondrial (NIFU4) from Arabidopsis thaliana (Mouse-ear cress).